The following is an 82-amino-acid chain: uncharacterized protein (82 aa).

This is an uncharacterized protein from Orgyia pseudotsugata multicapsid polyhedrosis virus (OpMNPV).